The primary structure comprises 321 residues: Acetylglutamate kinase (321 aa).

Residues 88–89 (GG), Arg-110, and Asn-216 each bind substrate.

Belongs to the acetylglutamate kinase family. ArgB subfamily.

Its subcellular location is the cytoplasm. The catalysed reaction is N-acetyl-L-glutamate + ATP = N-acetyl-L-glutamyl 5-phosphate + ADP. It participates in amino-acid biosynthesis; L-arginine biosynthesis; N(2)-acetyl-L-ornithine from L-glutamate: step 2/4. Its function is as follows. Catalyzes the ATP-dependent phosphorylation of N-acetyl-L-glutamate. This Ehrlichia chaffeensis (strain ATCC CRL-10679 / Arkansas) protein is Acetylglutamate kinase.